The primary structure comprises 167 residues: Zymogen granule membrane protein 16 (167 aa).

An N-terminal signal peptide occupies residues 1-16 (MLTVALLALLCASASG). One can recognise a Jacalin-type lectin domain in the interval 24-159 (SSYSGEYGGG…IDAIGLHWDV (136 aa)).

It belongs to the jacalin lectin family. In terms of tissue distribution, highly expressed in liver. Detected at lower levels in colon, ileum and jejunum.

The protein resides in the secreted. It localises to the extracellular space. It is found in the extracellular matrix. The protein localises to the zymogen granule lumen. Its subcellular location is the golgi apparatus lumen. Functionally, may play a role in protein trafficking. May act as a linker molecule between the submembranous matrix on the luminal side of zymogen granule membrane (ZGM) and aggregated secretory proteins during granule formation in the TGN. The chain is Zymogen granule membrane protein 16 (ZG16) from Homo sapiens (Human).